Here is a 285-residue protein sequence, read N- to C-terminus: HTH-type transcriptional regulator MurR (285 aa).

The 77-residue stretch at 1–77 (MLYLTKIRNA…MALIGEYSAS (77 aa)) folds into the HTH rpiR-type domain. A DNA-binding region (H-T-H motif) is located at residues 37-56 (SRKMAKQLGISQSSIVKFAQ). An SIS domain is found at 128-268 (IIEVISKAPF…FVGLVQLNDV (141 aa)).

As to quaternary structure, homotetramer.

Its pathway is amino-sugar metabolism; N-acetylmuramate degradation [regulation]. Represses the expression of the murPQ operon involved in the uptake and degradation of N-acetylmuramic acid (MurNAc). Binds to two adjacent inverted repeats within the operator region. MurNAc 6-phosphate, the substrate of MurQ, is the specific inducer that weakens binding of MurR to the operator. The sequence is that of HTH-type transcriptional regulator MurR from Escherichia coli O9:H4 (strain HS).